The chain runs to 1651 residues: Putative serine/threonine-protein kinase/receptor R818 (1651 aa).

The N-terminal stretch at 1–19 (MKSIGIFVVALWLTHFCDG) is a signal peptide. Residues Asn-111, Asn-135, Asn-190, Asn-236, Asn-275, Asn-276, Asn-287, Asn-452, Asn-455, Asn-477, Asn-495, Asn-540, Asn-596, and Asn-722 are each glycosylated (N-linked (GlcNAc...) asparagine; by host). The chain crosses the membrane as a helical span at residues 749–769 (IILAIVIPVSFVICCIIIVLV). The Protein kinase 1 domain maps to 793–1057 (LDFMESLGSG…EIMTKLSTLI (265 aa)). Residues 799 to 807 (LGSGGSGEV) and Lys-820 contribute to the ATP site. The active-site Proton acceptor is Asp-915. The interval 1089–1115 (IHNNDETKNSFGSTTYGSNTISSSSNT) is disordered. Residues 1100-1115 (GSTTYGSNTISSSSNT) show a composition bias toward low complexity. The Guanylate cyclase domain maps to 1135 to 1278 (IIVFTDIISA…VTVNIAAKIT (144 aa)). In terms of domain architecture, Protein kinase 2 spans 1394 to 1645 (IQIGKQIGVG…DVIMGLNDML (252 aa)). Residues 1400-1408 (IGVGSYGIV) and Lys-1421 each bind ATP. Asp-1515 (proton acceptor) is an active-site residue.

The protein resides in the membrane. The enzyme catalyses L-seryl-[protein] + ATP = O-phospho-L-seryl-[protein] + ADP + H(+). The catalysed reaction is L-threonyl-[protein] + ATP = O-phospho-L-threonyl-[protein] + ADP + H(+). The polypeptide is Putative serine/threonine-protein kinase/receptor R818 (Acanthamoeba polyphaga mimivirus (APMV)).